Consider the following 205-residue polypeptide: CASP-like protein 2A1 (205 aa).

The segment at 1–25 is disordered; it reads MDKSKVSTAVGGETPVGLITGSRDD. Topologically, residues 1–34 are cytoplasmic; it reads MDKSKVSTAVGGETPVGLITGSRDDELESGSMRT. A helical transmembrane segment spans residues 35-55; sequence AETVLRLVPMAFCISALVLML. At 56-76 the chain is on the extracellular side; sequence KNSQTNDFGTLSYSDLGAFRY. Residues 77-97 traverse the membrane as a helical segment; that stretch reads LVHANGICAGYSLLSAIIVAM. Topologically, residues 98–105 are cytoplasmic; it reads PRPSTMSR. Residues 106-126 form a helical membrane-spanning segment; it reads AWTFFFLDQVLTYVILAAAAV. At 127-156 the chain is on the extracellular side; that stretch reads SVEALYLARKGDIAITWSAACVSFGGFCHK. A helical membrane pass occupies residues 157–177; the sequence is AITSAVITFIVVVCYALLSLV. Over 178 to 205 the chain is Cytoplasmic; the sequence is SSYKLFSRYGAPDVSYPGKGIEVAAFHS.

This sequence belongs to the Casparian strip membrane proteins (CASP) family. Homodimer and heterodimers.

It is found in the cell membrane. This is CASP-like protein 2A1 from Ricinus communis (Castor bean).